Consider the following 91-residue polypeptide: Small ribosomal subunit protein uS19 (91 aa).

Belongs to the universal ribosomal protein uS19 family.

In terms of biological role, protein S19 forms a complex with S13 that binds strongly to the 16S ribosomal RNA. This chain is Small ribosomal subunit protein uS19, found in Synechococcus elongatus (strain ATCC 33912 / PCC 7942 / FACHB-805) (Anacystis nidulans R2).